The following is a 137-amino-acid chain: MEKTLSIIKPDAVKKGVIGKILDRFESNGLRIAAMKKVQLSKEQAENFYAVHKERPFFKDLVEFMISGPVVVSVLEGEGAVLKNRDLMGATNPKEAKAGTIRADFAESIDANAVHGSDSLENAKIEIEFFFKPNEIC.

ATP is bound by residues lysine 9, phenylalanine 57, arginine 85, threonine 91, arginine 102, and asparagine 112. Histidine 115 acts as the Pros-phosphohistidine intermediate in catalysis.

It belongs to the NDK family. As to quaternary structure, homotetramer. Requires Mg(2+) as cofactor.

The protein localises to the cytoplasm. It catalyses the reaction a 2'-deoxyribonucleoside 5'-diphosphate + ATP = a 2'-deoxyribonucleoside 5'-triphosphate + ADP. The enzyme catalyses a ribonucleoside 5'-diphosphate + ATP = a ribonucleoside 5'-triphosphate + ADP. In terms of biological role, major role in the synthesis of nucleoside triphosphates other than ATP. The ATP gamma phosphate is transferred to the NDP beta phosphate via a ping-pong mechanism, using a phosphorylated active-site intermediate. This is Nucleoside diphosphate kinase from Campylobacter jejuni subsp. jejuni serotype O:23/36 (strain 81-176).